A 370-amino-acid polypeptide reads, in one-letter code: Anhydro-N-acetylmuramic acid kinase (370 aa).

Position 13–20 (G13–D20) interacts with ATP.

The protein belongs to the anhydro-N-acetylmuramic acid kinase family.

The enzyme catalyses 1,6-anhydro-N-acetyl-beta-muramate + ATP + H2O = N-acetyl-D-muramate 6-phosphate + ADP + H(+). Its pathway is amino-sugar metabolism; 1,6-anhydro-N-acetylmuramate degradation. The protein operates within cell wall biogenesis; peptidoglycan recycling. Catalyzes the specific phosphorylation of 1,6-anhydro-N-acetylmuramic acid (anhMurNAc) with the simultaneous cleavage of the 1,6-anhydro ring, generating MurNAc-6-P. Is required for the utilization of anhMurNAc either imported from the medium or derived from its own cell wall murein, and thus plays a role in cell wall recycling. The chain is Anhydro-N-acetylmuramic acid kinase from Vibrio vulnificus (strain YJ016).